Reading from the N-terminus, the 2521-residue chain is MENSYDDQSIAVIGLSCRFPGDADNVERFWNLLREGQSAISTVPGNRWNSRRFQDDKNHSQNTSRTNRAHFLKEDVSAFDANFFSISKSEAVSMDPQQRLMLEVSYEAFENAGLAVESLAQSQMGCWVSSFSQDWREMQFSDLQSVPKYAMSGMQPEMLANRVSYFFDLHGPSMALETACSGSLVGLHVACQSLRSGECDAALVGGANLFLNPNMFLALSNQNFLAPDGLSKAFDASANGYGRGEGFAAVILKPVEKAIRDGDPIRAVIRATGTNQDGRTKGLTMPNGDAQETLIRSTYRSAGLELKDTAYFEAHGTGTQVGDFEELSAIARTVADARKREGLEELWVGSAKTNIGHLEATAGLAGVLKAILVLENGVIPPNLHFKNPNPRIPFQEYHIRVPTQEVTWNPDTIRRVSVNSFGFGGSNAHAIIDNGKQYLHQRRSKATLVNGTHAADDKELKPEVPQIFVINSSDQEGLGRQRSALRHYLANFGKEGRANSGWFRDLAFTLGKKRCRLPWRSFCTASTVLELSEALEATDFPKIRSGTAALRLAYVFTGQGAQWAQMGLELFQFPTFKQSVVAADSHLKKLGCPWSVVEELQRSGAESNIHVSWYSQTLCTVLQVALVELLQSWGITPRSVVGHSSGEMAAAFAIGALAREDAWKIAYWRGKLSSELTERAPDLSGAMMAVGASHEQAQKWVEGLTRGKCVVACINSPSSVTVSGDDAGLDELAAMLKEKEVFARKLKVTTAYHSHHMKVVAEAYHDVLKDVEVRNVPTDGPQMFTSVSETLVNPSDLDASHWVANLVSPVLFSNTVAELARAKTPKDQATGSAVDLMLEIGPHAALRGPVTQILQAKGLRNVEYQSLLSRGCNAIQTTLAAVADLICRGVTADIDAVNNAHTPQGAGHKTMPANTLTTLPPYAWNHSRTFWTESRMLREAKAVNDSPSSFIGLPMPSFVANEHIWRGFLRLEHVPWVRHHKMQSAVLFPAGGFLAMAIEGASQFQGKDNSRVAKGYKLRDVRIDSAVILTEESNIEHILQLRPHDTARSQQTDSYDGWWEFKISTSAGSDESLKCNCYGLVTVEFEQLIHPSHASKASSTTVQQAEAFYERLESVGLEYGPSFQAIKTILHSSGGQTEGEIEIMDIDVNSTTPGGSDGRPYVVHPTTLEALFQMAYAAFDNQSDGVKKALLVTDIEELLLDASISHTPGARLQTSARSSRLGFREMLADVTVSPTASNAGGISVRGLTCVEMPSTAGVNSDVGITGREGYDSMLSKFVWKPALNLLSATEREHLLIAATKVTDAETEAILAREAADFQNVKSALQASQRGKTGSLKLRNALKWISQELPDAKVFGKALENVSQDGQGAGPTGPIVDVLSGTSTPDVLLSGYGSTEKFLAALPGVKVSLQKMYQLVSIMAHENPDLAVLEIGSGSSGEEDTSIFSTTDIPTTIKYTRAVATPEILRNLQEFSPPAGPIPRFTVLDLEQDLADQGIDLASFDIIIGNNVLSNSRNVENVLRRTKSLLRDEGNMCFVELTKPSSRAVPVLGVVCDWWKRGDDGLRRPLSSDSIKDILTEQGFTLDFLSPDFVDPAIQQSSLVFASSSAENLPTASATDDADDEEIYILISPELKSPDAVVQNVASSFQHSQIVTWGAGVDFKGKYIISLLELYDPFINHLTEEDFDILKKLVTQASSLLWVTGIPEPHASTILGFARVVRFEIPSLDFRVLTLDPATIEDAKKNSIHISQVQRSKSPDKEYKELDSIVHIPRVTVDASLNHQISNLCLSEAIESKPLGSLERPQKLCIRNPGMLNTLCFQADNVSENELQDDEVEVRVMASGLNSKDVMVALGHITDTHLGLEASGVVLRVGASVTHLQLGDKVVMLANGAHRTTLRGKAAVCQKIPQDMTYEEAAGFPFAYCTAYYTLLHVLRAQSGQSVLIHAAAGAVGQALVRLAQHLGLEVFTTAESADDRAFVQELLGLFPDRIYHPQDKGLVQHVMRITGDVGVDFIVNPLSVEEIADSLNCLADFGTFVEMGMENDSRHSTLNTRLFRRDTTFVAVNLQRVLELRPKLIGEILQKALGLFQDGQVKSVSPSNVYPVSEAEAAIQMFQDNRHHGKITLSYSSEDFVSVLQNPKDSLKLSPDNTYLIAGGLGGIGRSLATLLVDCGARHIAMVSRSGVTSVEQQQLIDNLSERGAKIGVYKCSIGDANALGRALTQCASEMPPIKGIIHSAVVFRDAVLHNMTYKQWDELLDGKLRGSWNLHALTTSYNLDFFLCIGSFMAIIGGISQSNYAAGSAFQDGLAHLRQSQGLPAVTIDLGIVKGFGAVEEQGAVGHTLEWREPFGVSEPEVHALIKGALLGQRGNWALDVPAQMINSIPTGGMVRSSGVSQPYYFDDPRFSIMAKIGMDSENSDTQASVSLKELLADAESSDDAVLFVTGAVISKVAKLMQVAEEEIDTGKSLHAYGVDSLVAVEYVSWAKKEVSADITVFDVMASKPIMSFARDLVGKGKWGAAIPACKS.

Residues 7–434 (DQSIAVIGLS…GSNAHAIIDN (428 aa)) form the Ketosynthase family 3 (KS3) domain. A disordered region spans residues 47 to 66 (RWNSRRFQDDKNHSQNTSRT). Catalysis depends on for beta-ketoacyl synthase activity residues Cys180, His315, and His357. Positions 554-855 (YVFTGQGAQW…LRGPVTQILQ (302 aa)) constitute a Malonyl-CoA:ACP transacylase (MAT) domain. Residues 948-1088 (SSFIGLPMPS…GLVTVEFEQL (141 aa)) are N-terminal hotdog fold. Positions 948–1258 (SSFIGLPMPS…CVEMPSTAGV (311 aa)) constitute a PKS/mFAS DH domain. Positions 949 to 1256 (SFIGLPMPSF…LTCVEMPSTA (308 aa)) are dehydratase (DH) domain. Residues 1100-1258 (TTVQQAEAFY…CVEMPSTAGV (159 aa)) form a C-terminal hotdog fold region. One can recognise an Enoyl reductase (ER) domain in the interval 1809–2121 (GMLNTLCFQA…DNRHHGKITL (313 aa)). The Ketoreductase (KR) domain maps to 2146–2323 (TYLIAGGLGG…AVTIDLGIVK (178 aa)). Residues 2433–2510 (DAVLFVTGAV…SFARDLVGKG (78 aa)) form the Carrier domain. O-(pantetheine 4'-phosphoryl)serine is present on Ser2470.

Pantetheine 4'-phosphate serves as cofactor.

It participates in secondary metabolite biosynthesis. Functionally, partially reducing polyketide synthase; part of the gene cluster that mediates the biosynthesis of polyesters containing 2,4-dihydroxy-6-(2-hydroxypropyl)benzoate and 3-hydroxybutyrate moieties, such as talapolyester G, 15G256beta and 15G256beta-2; as well as to oxidized derivatives such as 15G256alpha. The biosynthesis of the polyesters probably starts with the formation of the diketide 3-hydroxybutyryl-S-ACP catalyzed by the partially reducing polyketide synthase tpeA. The acceptance of 3-hydroxybutyryl by the non-reducing polyketide synthase tpeB would initiate further elongation and cyclization, catalyzed by KS and PT, respectively, to form 2,4-dihydroxy-6-(2-hydroxyn-propyl)benzoyl-S-ACP intermediate. The TE domain could catalyze lactonization at this step to yield 6-hydroxymellein as a derailment product. The polyesterification process maybe occurs when additional molecules of 3-hydroxybutyryl are transferred to tpeB. Following the first esterification step, an intramolecular cyclization catalyzed by the TE domain of tpeB would give talarodioxadione 1, whereas the ethyl esterification of talapolyester G perhaps happens spontaneously. Further oxidation by the cytochrome P450 monooxygenase tpeC then leads to the formation of oxidized derivatives. This chain is Partially reducing polyketide synthase tpeA, found in Talaromyces stipitatus (strain ATCC 10500 / CBS 375.48 / QM 6759 / NRRL 1006) (Penicillium stipitatum).